The following is a 165-amino-acid chain: Protein SprT (165 aa).

Positions 22–163 (LAQANLKLDR…RCVHCGEPLV (142 aa)) constitute a SprT-like domain. Zn(2+) is bound at residue H78. Residue E79 is part of the active site. H82 lines the Zn(2+) pocket.

Belongs to the SprT family. It depends on Zn(2+) as a cofactor.

Its subcellular location is the cytoplasm. This Salmonella paratyphi C (strain RKS4594) protein is Protein SprT.